Consider the following 384-residue polypeptide: 8-amino-7-oxononanoate synthase (384 aa).

Arg-21 contributes to the substrate binding site. A pyridoxal 5'-phosphate-binding site is contributed by 108-109 (GF). His-133 contributes to the substrate binding site. Pyridoxal 5'-phosphate is bound by residues Ser-179, His-207, and Thr-233. N6-(pyridoxal phosphate)lysine is present on Lys-236. Residue Thr-352 coordinates substrate.

It belongs to the class-II pyridoxal-phosphate-dependent aminotransferase family. BioF subfamily. Homodimer. It depends on pyridoxal 5'-phosphate as a cofactor.

It carries out the reaction 6-carboxyhexanoyl-[ACP] + L-alanine + H(+) = (8S)-8-amino-7-oxononanoate + holo-[ACP] + CO2. It participates in cofactor biosynthesis; biotin biosynthesis. Its function is as follows. Catalyzes the decarboxylative condensation of pimeloyl-[acyl-carrier protein] and L-alanine to produce 8-amino-7-oxononanoate (AON), [acyl-carrier protein], and carbon dioxide. This chain is 8-amino-7-oxononanoate synthase, found in Escherichia coli O6:H1 (strain CFT073 / ATCC 700928 / UPEC).